Here is a 145-residue protein sequence, read N- to C-terminus: D-aminoacyl-tRNA deacylase (145 aa).

The short motif at 137 to 138 (GP) is the Gly-cisPro motif, important for rejection of L-amino acids element.

Belongs to the DTD family. As to quaternary structure, homodimer.

It localises to the cytoplasm. The enzyme catalyses glycyl-tRNA(Ala) + H2O = tRNA(Ala) + glycine + H(+). It catalyses the reaction a D-aminoacyl-tRNA + H2O = a tRNA + a D-alpha-amino acid + H(+). An aminoacyl-tRNA editing enzyme that deacylates mischarged D-aminoacyl-tRNAs. Also deacylates mischarged glycyl-tRNA(Ala), protecting cells against glycine mischarging by AlaRS. Acts via tRNA-based rather than protein-based catalysis; rejects L-amino acids rather than detecting D-amino acids in the active site. By recycling D-aminoacyl-tRNA to D-amino acids and free tRNA molecules, this enzyme counteracts the toxicity associated with the formation of D-aminoacyl-tRNA entities in vivo and helps enforce protein L-homochirality. The sequence is that of D-aminoacyl-tRNA deacylase from Alcanivorax borkumensis (strain ATCC 700651 / DSM 11573 / NCIMB 13689 / SK2).